Here is a 103-residue protein sequence, read N- to C-terminus: Flagellar hook-basal body complex protein FliE (103 aa).

The protein belongs to the FliE family.

The protein localises to the bacterial flagellum basal body. The polypeptide is Flagellar hook-basal body complex protein FliE (Cronobacter sakazakii (strain ATCC BAA-894) (Enterobacter sakazakii)).